The chain runs to 424 residues: Subtilisin-like protease 2 (424 aa).

The first 17 residues, Met-1–Gly-17, serve as a signal peptide directing secretion. Positions Glu-18 to Ala-123 are excised as a propeptide. Residues Gln-37 to Ala-123 enclose the Inhibitor I9 domain. A Peptidase S8 domain is found at Arg-132–Lys-424. Catalysis depends on charge relay system residues Asp-170 and His-202. N-linked (GlcNAc...) asparagine glycans are attached at residues Asn-249, Asn-262, and Asn-350. Ser-359 serves as the catalytic Charge relay system. The N-linked (GlcNAc...) asparagine glycan is linked to Asn-390.

Belongs to the peptidase S8 family.

It localises to the secreted. Functionally, secreted subtilisin-like serine protease with keratinolytic activity that contributes to pathogenicity. This Arthroderma otae (Microsporum canis) protein is Subtilisin-like protease 2 (SUB2).